The following is a 216-amino-acid chain: MSDSANSSCIIIAIAGASASGKSLIASTVHRELRDQVGSDDISIISEDCYYKDQSHLDFATRTQTNYDHPNSMDRDLLLEHLRALKAGKSVDIPQYSYVEHTRMKEVTHFTPKKVIILEGILLLTDERVRNELSLSLFVDAPLDICFIRRLKRDMEERGRSLESVIEQYRKTVRPMFLQFIEPSKQYADIIIPRGGKNRIAINMLKAQILHLLGRK.

16 to 23 (GASASGKS) contacts ATP.

Belongs to the uridine kinase family.

The protein resides in the cytoplasm. The enzyme catalyses uridine + ATP = UMP + ADP + H(+). It catalyses the reaction cytidine + ATP = CMP + ADP + H(+). It functions in the pathway pyrimidine metabolism; CTP biosynthesis via salvage pathway; CTP from cytidine: step 1/3. The protein operates within pyrimidine metabolism; UMP biosynthesis via salvage pathway; UMP from uridine: step 1/1. The sequence is that of Uridine kinase from Mannheimia succiniciproducens (strain KCTC 0769BP / MBEL55E).